The primary structure comprises 295 residues: MLERLTTEQRNNKTQNLDEMTTKEILQVMNEEDQTVAIAVSKELEHIERLVQKVIASFRQGGRLIYMGAGTSGRLGILDAVECPPTFGVEKEMVQGLIAGGLEAVTNAVEGAEDNEELAVKDLQSIGLTAKDTVIGIAASGRTPYVISGLRYAKQIGATTGSIACNKGAEISKYADVSVEVETGPEILTGSTRLKAGTAQKMVLNMISTASMIGIGKVYKNLMVDVQATNFKLKERAKRIIMEATDVDDKTAARYYEAARGHVKTAIVMILLQCSYEEATERLQKANGFVRKALQ.

One can recognise an SIS domain in the interval 54–217 (VIASFRQGGR…STASMIGIGK (164 aa)). Catalysis depends on glutamate 82, which acts as the Proton donor. Glutamate 113 is a catalytic residue.

Belongs to the GCKR-like family. MurNAc-6-P etherase subfamily. Homodimer.

It carries out the reaction N-acetyl-D-muramate 6-phosphate + H2O = N-acetyl-D-glucosamine 6-phosphate + (R)-lactate. It functions in the pathway amino-sugar metabolism; N-acetylmuramate degradation. In terms of biological role, specifically catalyzes the cleavage of the D-lactyl ether substituent of MurNAc 6-phosphate, producing GlcNAc 6-phosphate and D-lactate. The protein is N-acetylmuramic acid 6-phosphate etherase of Geobacillus sp. (strain WCH70).